We begin with the raw amino-acid sequence, 500 residues long: Lysine--tRNA ligase (500 aa).

2 residues coordinate Mg(2+): Glu-410 and Glu-417.

The protein belongs to the class-II aminoacyl-tRNA synthetase family. Homodimer. It depends on Mg(2+) as a cofactor.

Its subcellular location is the cytoplasm. The enzyme catalyses tRNA(Lys) + L-lysine + ATP = L-lysyl-tRNA(Lys) + AMP + diphosphate. This chain is Lysine--tRNA ligase, found in Pseudomonas putida (strain ATCC 700007 / DSM 6899 / JCM 31910 / BCRC 17059 / LMG 24140 / F1).